The chain runs to 416 residues: CBL-interacting serine/threonine-protein kinase 21 (416 aa).

The Protein kinase domain maps to 12-264 (YEIGRTIGEG…AEIIIKDSWF (253 aa)). ATP is bound by residues 18–26 (IGEGNFAKV) and lysine 41. Aspartate 134 functions as the Proton acceptor in the catalytic mechanism. The segment at 152–178 (DFGLSAVPKSGDMLSTACGSPCYIAPE) is activation loop. Serine 156 carries the phosphoserine modification. Threonine 167 carries the phosphothreonine modification. The NAF domain occupies 291–315 (ASSNFINAFQIIAMSSDLDLSGLFE). The PPI stretch occupies residues 321–351 (RYKTRIGSKNTAQETIKKIEAAATYVSLSVE).

This sequence belongs to the protein kinase superfamily. CAMK Ser/Thr protein kinase family. SNF1 subfamily. Interacts with CBL9. It depends on Mn(2+) as a cofactor.

It carries out the reaction L-seryl-[protein] + ATP = O-phospho-L-seryl-[protein] + ADP + H(+). The catalysed reaction is L-threonyl-[protein] + ATP = O-phospho-L-threonyl-[protein] + ADP + H(+). CIPK serine-threonine protein kinases interact with CBL proteins. Binding of a CBL protein to the regulatory NAF domain of CIPK protein lead to the activation of the kinase in a calcium-dependent manner. This chain is CBL-interacting serine/threonine-protein kinase 21 (CIPK21), found in Arabidopsis thaliana (Mouse-ear cress).